The chain runs to 175 residues: Tail fiber assembly protein U (175 aa).

The protein belongs to the tfa family.

The protein localises to the virion. Its subcellular location is the host cytoplasm. Functionally, chaperone involved in tail fiber assembly. Remains associated to the tail fiber and participates in the host receptor binding. Binds to the primary receptor. Two alternate tail fiber assembly proteins U and U' are encoded extending the host range of the virus. This is Tail fiber assembly protein U (U) from Enterobacteriaceae (Bacteriophage Mu).